We begin with the raw amino-acid sequence, 764 residues long: FAST kinase domain-containing protein 5, mitochondrial (764 aa).

A mitochondrion-targeting transit peptide spans 1-27; the sequence is MAATLKSLKLVRYRAFCSPSAFGAVRS. A Phosphoserine modification is found at S95. K507 carries the N6-acetyllysine modification. One can recognise an RAP domain in the interval 697-757; the sequence is LAVQFTNRNQ…RLEKLAFLHE (61 aa).

The protein belongs to the FAST kinase family. As to quaternary structure, found in a complex with GRSF1, DDX28, DHX30 and FASTKD2. Associates with the 12S mitochondrial rRNA (12S mt-rRNA). Expression detected in spleen, thymus, testis, ovary, colon, heart, smooth muscle, kidney, brain, lung, liver and white adipose tissue with highest expression in heart, smooth muscle, liver and thyroid.

Its subcellular location is the mitochondrion matrix. The protein localises to the mitochondrion nucleoid. Functionally, plays an important role in the processing of non-canonical mitochondrial mRNA precursors. This Homo sapiens (Human) protein is FAST kinase domain-containing protein 5, mitochondrial (FASTKD5).